Reading from the N-terminus, the 211-residue chain is Protein-L-isoaspartate O-methyltransferase (211 aa).

The active site involves serine 62.

This sequence belongs to the methyltransferase superfamily. L-isoaspartyl/D-aspartyl protein methyltransferase family.

It localises to the cytoplasm. The enzyme catalyses [protein]-L-isoaspartate + S-adenosyl-L-methionine = [protein]-L-isoaspartate alpha-methyl ester + S-adenosyl-L-homocysteine. Catalyzes the methyl esterification of L-isoaspartyl residues in peptides and proteins that result from spontaneous decomposition of normal L-aspartyl and L-asparaginyl residues. It plays a role in the repair and/or degradation of damaged proteins. This Shewanella baltica (strain OS195) protein is Protein-L-isoaspartate O-methyltransferase.